A 201-amino-acid chain; its full sequence is 3-isopropylmalate dehydratase small subunit (201 aa).

This sequence belongs to the LeuD family. LeuD type 1 subfamily. Heterodimer of LeuC and LeuD.

It catalyses the reaction (2R,3S)-3-isopropylmalate = (2S)-2-isopropylmalate. Its pathway is amino-acid biosynthesis; L-leucine biosynthesis; L-leucine from 3-methyl-2-oxobutanoate: step 2/4. Its function is as follows. Catalyzes the isomerization between 2-isopropylmalate and 3-isopropylmalate, via the formation of 2-isopropylmaleate. This is 3-isopropylmalate dehydratase small subunit from Mesorhizobium japonicum (strain LMG 29417 / CECT 9101 / MAFF 303099) (Mesorhizobium loti (strain MAFF 303099)).